The following is a 681-amino-acid chain: DNA ligase (681 aa).

NAD(+) contacts are provided by residues 34 to 38 (DAEYD), 83 to 84 (SL), and Glu115. Residue Lys117 is the N6-AMP-lysine intermediate of the active site. NAD(+)-binding residues include Arg138, Glu185, Lys301, and Lys325. Cys419, Cys422, Cys437, and Cys443 together coordinate Zn(2+). The BRCT domain maps to 602–681 (RKSDVLAGQT…AALLALIGER (80 aa)).

The protein belongs to the NAD-dependent DNA ligase family. LigA subfamily. It depends on Mg(2+) as a cofactor. Mn(2+) serves as cofactor.

The enzyme catalyses NAD(+) + (deoxyribonucleotide)n-3'-hydroxyl + 5'-phospho-(deoxyribonucleotide)m = (deoxyribonucleotide)n+m + AMP + beta-nicotinamide D-nucleotide.. DNA ligase that catalyzes the formation of phosphodiester linkages between 5'-phosphoryl and 3'-hydroxyl groups in double-stranded DNA using NAD as a coenzyme and as the energy source for the reaction. It is essential for DNA replication and repair of damaged DNA. This is DNA ligase from Chloroflexus aggregans (strain MD-66 / DSM 9485).